The sequence spans 615 residues: RNA polymerase sigma factor RpoD (615 aa).

The tract at residues 166–216 (GYIDPDDGITPPAAEVPPPVDTKTAKADDDSEDEEAEATEDEEEAESGPDP) is disordered. Acidic residues predominate over residues 194-212 (DDSEDEEAEATEDEEEAES). The segment at 381-451 (MVEANLRLVI…TRSIADQART (71 aa)) is sigma-70 factor domain-2. The short motif at 405–408 (DLIQ) is the Interaction with polymerase core subunit RpoC element. Residues 460 to 536 (ETINKLNRIS…DSTMQSPIDV (77 aa)) form a sigma-70 factor domain-3 region. The interval 549 to 602 (VLSGLTAREAKVLRMRFGIDMNTDHTLEEVGKQFDVTRERIRQIEAKALRKLRH) is sigma-70 factor domain-4. Residues 575–594 (LEEVGKQFDVTRERIRQIEA) constitute a DNA-binding region (H-T-H motif).

This sequence belongs to the sigma-70 factor family. RpoD/SigA subfamily. In terms of assembly, interacts transiently with the RNA polymerase catalytic core.

Its subcellular location is the cytoplasm. Functionally, sigma factors are initiation factors that promote the attachment of RNA polymerase to specific initiation sites and are then released. This sigma factor is the primary sigma factor during exponential growth. This is RNA polymerase sigma factor RpoD from Pseudomonas protegens (strain DSM 19095 / LMG 27888 / CFBP 6595 / CHA0).